A 254-amino-acid polypeptide reads, in one-letter code: UPF0246 protein FTW_0267 (254 aa).

Belongs to the UPF0246 family.

This chain is UPF0246 protein FTW_0267, found in Francisella tularensis subsp. tularensis (strain WY96-3418).